We begin with the raw amino-acid sequence, 595 residues long: Estrogen receptor (595 aa).

The tract at residues 1–184 (MTMTLHTKAS…AMESVKETRY (184 aa)) is modulating(transactivation AF-1); mediates interaction with MACROD1. A glycan (O-linked (GlcNAc) serine) is linked at Ser10. The tract at residues 35-47 (LERALSEVYVDSS) is required for interaction with NCOA1. The segment at 35-174 (LERALSEVYV…LSSSSEKGSM (140 aa)) is interaction with DDX5; self-association. Residues Ser103 and Ser105 each carry the phosphoserine; by CDK2 modification. Position 118 is a phosphoserine (Ser118). The segment at 143-174 (DSGPPAFYRSNSDNRRQSGRERLSSSSEKGSM) is disordered. Residues 154 to 165 (SDNRRQSGRERL) show a composition bias toward basic and acidic residues. Ser167 bears the Phosphoserine; by CK2 mark. 2 consecutive NR C4-type zinc fingers follow at residues 185 to 205 (CAVCNDYASGYHYGVWSCEGC) and 221 to 245 (CPATNQCTIDKNRRKSCQACRLRKC). The segment at residues 185–250 (CAVCNDYASG…RLRKCYEVGM (66 aa)) is a DNA-binding region (nuclear receptor). A mediates interaction with DNTTIP2 region spans residues 185–310 (CAVCNDYASG…TKKNSPALSL (126 aa)). Positions 251 to 310 (MKGGIRKDRRGGRMLKHKRQRDDLEGRNDMGPSGDMRATNLWPSPLVIKHTKKNSPALSL) are hinge. Arg260 carries the asymmetric dimethylarginine; by PRMT1 modification. Positions 260–269 (RGGRMLKHKR) are enriched in basic residues. The tract at residues 260-285 (RGGRMLKHKRQRDDLEGRNDMGPSGD) is disordered. The tract at residues 262-595 (GRMLKHKRQR…SEAESFPNTI (334 aa)) is interaction with AKAP13. The tract at residues 264 to 595 (MLKHKRQRDD…SEAESFPNTI (332 aa)) is self-association. The region spanning 311–547 (TADQMVSALL…DLLLEMLDAH (237 aa)) is the NR LBD domain. The interval 311–595 (TADQMVSALL…SEAESFPNTI (285 aa)) is transactivation AF-2. The 17beta-estradiol site is built by Glu353 and Arg394. Cys447 is lipidated: S-palmitoyl cysteine. His524 is a 17beta-estradiol binding site. Tyr537 carries the phosphotyrosine; by Tyr-kinases modification. The interval 554-578 (SRMGVSPEEPSQSQLTTTNSTSSHS) is disordered. Positions 564 to 578 (SQSQLTTTNSTSSHS) are enriched in low complexity. Thr571 carries O-linked (GlcNAc) threonine glycosylation.

The protein belongs to the nuclear hormone receptor family. NR3 subfamily. In terms of assembly, binds DNA as a homodimer. Can form a heterodimer with ESR2. Interacts with coactivator NCOA5. Interacts with PELP1, the interaction is enhanced by 17-beta-estradiol; the interaction increases ESR1 transcriptional activity. Interacts with NCOA7; the interaction is ligand-inducible. Interacts with AKAP13, CUEDC2, HEXIM1, KDM5A, MAP1S, SMARD1, and UBE1C. Interacts with MUC1; the interaction is stimulated by 7 beta-estradiol (E2) and enhances ESR1-mediated transcription. Interacts with DNTTIP2, and UIMC1. Interacts with KMT2D/MLL2. Interacts with ATAD2; the interaction is enhanced by estradiol. Interacts with KIF18A and LDB1. Interacts with RLIM (via its C-terminus). Interacts with MACROD1. Interacts with SH2D4A and PLCG. Interacts with SH2D4A; the interaction blocks binding to PLCG and inhibits estrogen-induced cell proliferation. Interacts with DYNLL1. Interacts with CCDC62; the interaction requires estradiol and appears to enhance the transcription of target genes. Interacts with NR2C1; the interaction prevents homodimerization of ESR1 and suppresses its transcriptional activity and cell growth. Interacts with DNAAF4. Interacts with PRMT2. Interacts with RBFOX2. Interacts with EP300; the interaction is estrogen-dependent and enhanced by CITED1. Interacts with CITED1; the interaction is estrogen-dependent. Interacts with FAM120B, FOXL2, PHB2 and SLC30A9. Interacts with coactivators NCOA3 and NCOA6. Interacts with STK3/MST2 only in the presence of SAV1 and vice-versa. Binds to CSNK1D. Interacts with NCOA2; NCOA2 can interact with ESR1 AF-1 and AF-2 domains simultaneously and mediate their transcriptional synergy. Interacts with DDX5. Interacts with NCOA1; the interaction seems to require a self-association of N-terminal and C-terminal regions. Interacts with ZNF366, DDX17, NFKB1, RELA, SP1 and SP3. Interacts with NRIP1. Interacts with GPER1; the interaction occurs in an estrogen-dependent manner. Interacts with CLOCK and the interaction is stimulated by estrogen. Interacts with TRIP4 (ufmylated); estrogen dependent. Interacts with LMTK3; the interaction phosphorylates ESR1 (in vitro) and protects it against proteasomal degradation. Interacts with CCAR2 (via N-terminus) in a ligand-independent manner. Interacts with ZFHX3. Interacts with SFR1 in a ligand-dependent and -independent manner. Interacts with DCAF13, LATS1 and DCAF1; regulates ESR1 ubiquitination and ubiquitin-mediated proteasomal degradation. Interacts (via DNA-binding domain) with POU4F2 (C-terminus); this interaction increases the estrogen receptor ESR1 transcriptional activity in a DNA- and ligand 17-beta-estradiol-independent manner. Interacts with ESRRB isoform 1. Interacts with UBE3A and WBP2. Interacts with GTF2B. Interacts with RBM39. In the absence of hormonal ligand, interacts with TACC1. Interacts with PI3KR1 or PI3KR2 and PTK2/FAK1. Interacts with SRC. Interacts with BAG1; the interaction is promoted in the absence of estradiol (17-beta-estradiol/E2). Interacts with and ubiquitinated by STUB1; the interaction is promoted in the absence of estradiol (17-beta-estradiol/E2). Interacts with NEDD8. Post-translationally, ubiquitinated; regulated by LATS1 via DCAF1 it leads to ESR1 proteasomal degradation. Deubiquitinated by OTUB1. Ubiquitinated by STUB1/CHIP; in the CA1 hippocampal region following loss of endogenous circulating estradiol (17-beta-estradiol/E2). Ubiquitinated by UBR5, leading to its degradation: UBR5 specifically recognizes and binds ligand-bound ESR1 when it is not associated with coactivators (NCOAs). In presence of NCOAs, the UBR5-degron is not accessible, preventing its ubiquitination and degradation. Phosphorylated by cyclin A/CDK2 and CK1. Phosphorylation probably enhances transcriptional activity. Dephosphorylation at Ser-118 by PPP5C inhibits its transactivation activity. Phosphorylated by LMTK3 (in vitro). In terms of processing, palmitoylated at Cys-447 by ZDHHC7 and ZDHHC21. Palmitoylation is required for plasma membrane targeting and for rapid intracellular signaling via ERK and AKT kinases and cAMP generation, but not for signaling mediated by the nuclear hormone receptor. Post-translationally, dimethylated by PRMT1 at Arg-260. The methylation may favor cytoplasmic localization. Demethylated by JMJD6 at Arg-260.

The protein resides in the nucleus. Its subcellular location is the cytoplasm. It is found in the golgi apparatus. It localises to the cell membrane. Its function is as follows. Nuclear hormone receptor. The steroid hormones and their receptors are involved in the regulation of eukaryotic gene expression and affect cellular proliferation and differentiation in target tissues. Ligand-dependent nuclear transactivation involves either direct homodimer binding to a palindromic estrogen response element (ERE) sequence or association with other DNA-binding transcription factors, such as AP-1/c-Jun, c-Fos, ATF-2, Sp1 and Sp3, to mediate ERE-independent signaling. Ligand binding induces a conformational change allowing subsequent or combinatorial association with multiprotein coactivator complexes through LXXLL motifs of their respective components. Mutual transrepression occurs between the estrogen receptor (ER) and NF-kappa-B in a cell-type specific manner. Decreases NF-kappa-B DNA-binding activity and inhibits NF-kappa-B-mediated transcription from the IL6 promoter and displace RELA/p65 and associated coregulators from the promoter. Recruited to the NF-kappa-B response element of the CCL2 and IL8 promoters and can displace CREBBP. Present with NF-kappa-B components RELA/p65 and NFKB1/p50 on ERE sequences. Can also act synergistically with NF-kappa-B to activate transcription involving respective recruitment adjacent response elements; the function involves CREBBP. Can activate the transcriptional activity of TFF1. Also mediates membrane-initiated estrogen signaling involving various kinase cascades. Essential for MTA1-mediated transcriptional regulation of BRCA1 and BCAS3. Maintains neuronal survival in response to ischemic reperfusion injury when in the presence of circulating estradiol (17-beta-estradiol/E2). The sequence is that of Estrogen receptor (ESR1) from Mesocricetus auratus (Golden hamster).